A 242-amino-acid polypeptide reads, in one-letter code: Methylthioribulose-1-phosphate dehydratase (242 aa).

Cys-97 is a substrate binding site. Zn(2+) is bound by residues His-115 and His-117. Glu-139 (proton donor/acceptor) is an active-site residue. His-195 provides a ligand contact to Zn(2+).

It belongs to the aldolase class II family. MtnB subfamily. Homotetramer. Interacts with APAF1. May interact with CASP1. Zn(2+) serves as cofactor.

It localises to the cytoplasm. It catalyses the reaction 5-(methylsulfanyl)-D-ribulose 1-phosphate = 5-methylsulfanyl-2,3-dioxopentyl phosphate + H2O. It participates in amino-acid biosynthesis; L-methionine biosynthesis via salvage pathway; L-methionine from S-methyl-5-thio-alpha-D-ribose 1-phosphate: step 2/6. Functionally, catalyzes the dehydration of methylthioribulose-1-phosphate (MTRu-1-P) into 2,3-diketo-5-methylthiopentyl-1-phosphate (DK-MTP-1-P). Functions in the methionine salvage pathway, which plays a key role in cancer, apoptosis, microbial proliferation and inflammation. May inhibit the CASP1-related inflammatory response (pyroptosis), the CASP9-dependent apoptotic pathway and the cytochrome c-dependent and APAF1-mediated cell death. This chain is Methylthioribulose-1-phosphate dehydratase, found in Bos taurus (Bovine).